A 359-amino-acid polypeptide reads, in one-letter code: Acyl-CoA desaturase 3 (359 aa).

Positions 1–34 (MPGHLLQEEMTPSYTTTTTITAPPSGSLQNGREK) are disordered. The Cytoplasmic segment spans residues 1–72 (MPGHLLQEEM…EGPPPKLEYV (72 aa)). Positions 11–27 (TPSYTTTTTITAPPSGS) are enriched in low complexity. A helical membrane pass occupies residues 73–93 (WRNIILMALLHVGALYGITLV). Asparagine 75 serves as a coordination point for substrate. The Lumenal portion of the chain corresponds to 94 to 97 (PSCK). The helical transmembrane segment at 98 to 118 (LYTCLFAFVYYVISIEGIGAG) threads the bilayer. Topologically, residues 119–217 (VHRLWSHRTY…EKLVMFQRRY (99 aa)) are cytoplasmic. Positions 120 and 125 each coordinate Fe cation. The short motif at 120 to 125 (HRLWSH) is the Histidine box-1 element. Substrate is bound by residues asparagine 148, arginine 155, and aspartate 156. 3 residues coordinate Fe cation: histidine 157, histidine 160, and histidine 161. The short motif at 157 to 161 (HRAHH) is the Histidine box-2 element. Substrate-binding residues include arginine 188 and lysine 189. Serine 203 carries the phosphoserine modification. The helical transmembrane segment at 218–237 (YKPGILLMCFILPTLVPWYC) threads the bilayer. Topologically, residues 238 to 241 (WGET) are lumenal. The chain crosses the membrane as a helical span at residues 242 to 263 (FLNSFYVATLLRYAVVLNATWL). A substrate-binding site is contributed by tryptophan 262. The Cytoplasmic portion of the chain corresponds to 264–359 (VNSAAHLYGY…RTGDGSHKSG (96 aa)). Positions 269, 298, 301, and 302 each coordinate Fe cation. The short motif at 298–302 (HNYHH) is the Histidine box-3 element.

It belongs to the fatty acid desaturase type 1 family. Fe(2+) is required as a cofactor. Detected in skin, but at lower levels compared to Scd1. Detected in the middlle part of the sebaceous gland, but not in hair follicle. Not detected in liver and brain.

It localises to the endoplasmic reticulum membrane. The protein localises to the microsome membrane. The catalysed reaction is hexadecanoyl-CoA + 2 Fe(II)-[cytochrome b5] + O2 + 2 H(+) = (9Z)-hexadecenoyl-CoA + 2 Fe(III)-[cytochrome b5] + 2 H2O. In terms of biological role, stearoyl-CoA desaturase that utilizes O(2) and electrons from reduced cytochrome b5 to introduce the first double bond into saturated fatty acyl-CoA substrates. Catalyzes the insertion of a cis double bond at the delta-9 position into fatty acyl-CoA substrates including palmitoyl-CoA. Has a strong preference for saturated fatty acids with chain lengths of 14 or 16 carbon atoms (C14:0 and C16:0), and has only very low activity with stearatate (C18:0). Required for the biosynthesis of membrane phospholipids, cholesterol esters and triglycerides. In Mus musculus (Mouse), this protein is Acyl-CoA desaturase 3.